Reading from the N-terminus, the 119-residue chain is Beta-2-microglobulin (119 aa).

Residues methionine 1–alanine 20 form the signal peptide. Residues proline 25–threonine 114 form the Ig-like C1-type domain. Cysteine 45 and cysteine 100 are oxidised to a cystine.

This sequence belongs to the beta-2-microglobulin family. In terms of assembly, heterodimer of an alpha chain and a beta chain. Beta-2-microglobulin is the beta-chain of major histocompatibility complex class I molecules. Forms a heterotrimer with MR1 and a metabolite antigen.

The protein resides in the secreted. Component of the class I major histocompatibility complex (MHC). Involved in the presentation of peptide antigens to the immune system. The chain is Beta-2-microglobulin (B2m) from Rattus norvegicus (Rat).